A 386-amino-acid polypeptide reads, in one-letter code: Patatin-17 (386 aa).

The signal sequence occupies residues 1-23; the sequence is MATTKSFLILIFMILATTSSTFA. The 198-residue stretch at 32-229 folds into the PNPLA domain; the sequence is LSIDGGGIRG…TVADPALLSI (198 aa). The short motif at 36-41 is the GXGXXG element; that stretch reads GGGIRG. Residues 75 to 79 carry the GXSXG motif; it reads GTSTG. Ser77 functions as the Nucleophile in the catalytic mechanism. Asn202 is a glycosylation site (N-linked (GlcNAc...) asparagine). Asp215 acts as the Proton acceptor in catalysis. The DGA/G signature appears at 215–217; it reads DGA. Residues 321 to 384 are a coiled coil; it reads ENALTGTTTE…DRKKLRANKA (64 aa).

This sequence belongs to the patatin family.

The protein localises to the vacuole. Functionally, non-specific lipolytic acyl hydrolase (LAH), an activity which is thought to be involved in the response of tubers to pathogens. Catalyzes the non-specific hydrolysis of phospholipids, glycolipids, sulfolipids, and mono- and diacylglycerols includng p-nitrophenyl caprate. Confers resistance to southern corn rootworm (SCRW). The protein is Patatin-17 of Solanum cardiophyllum (Heartleaf nightshade).